Here is a 93-residue protein sequence, read N- to C-terminus: Defensin-like protein 209 (93 aa).

Positions 1-19 (MKITILFLTLLVLSSSCTS) are cleaved as a signal peptide. 3 disulfide bridges follow: Cys63/Cys80, Cys66/Cys85, and Cys70/Cys87.

Belongs to the DEFL family.

It is found in the secreted. The protein is Defensin-like protein 209 of Arabidopsis thaliana (Mouse-ear cress).